The primary structure comprises 215 residues: Pyrrolidone-carboxylate peptidase (215 aa).

Residues Glu-80, Cys-143, and His-167 contribute to the active site.

The protein belongs to the peptidase C15 family. Homotetramer.

It is found in the cytoplasm. The enzyme catalyses Release of an N-terminal pyroglutamyl group from a polypeptide, the second amino acid generally not being Pro.. Removes 5-oxoproline from various penultimate amino acid residues except L-proline. This Bacillus cereus (strain G9842) protein is Pyrrolidone-carboxylate peptidase.